The chain runs to 181 residues: Oligoribonuclease (181 aa).

The Exonuclease domain maps to 8–171 (LIWIDLEMTG…DDIRESVAEL (164 aa)). Tyrosine 129 is a catalytic residue.

Belongs to the oligoribonuclease family.

It is found in the cytoplasm. 3'-to-5' exoribonuclease specific for small oligoribonucleotides. The polypeptide is Oligoribonuclease (Enterobacter sp. (strain 638)).